Here is a 726-residue protein sequence, read N- to C-terminus: Catalase-peroxidase (726 aa).

The tryptophyl-tyrosyl-methioninium (Trp-Tyr) (with M-239) cross-link spans 90-213; the sequence is WHAAGTYRIG…LAAVQMGLIY (124 aa). His91 (proton acceptor) is an active-site residue. Positions 213-239 form a cross-link, tryptophyl-tyrosyl-methioninium (Tyr-Met) (with W-90); the sequence is YVNPEGPNGKPDPAAAARDIRETFARM. His254 is a binding site for heme b. Residues 338–359 form a disordered region; that stretch reads TPKGGAGAGTVPDAHDPSKRHA.

This sequence belongs to the peroxidase family. Peroxidase/catalase subfamily. In terms of assembly, homodimer or homotetramer. Requires heme b as cofactor. Post-translationally, formation of the three residue Trp-Tyr-Met cross-link is important for the catalase, but not the peroxidase activity of the enzyme.

It carries out the reaction H2O2 + AH2 = A + 2 H2O. The catalysed reaction is 2 H2O2 = O2 + 2 H2O. In terms of biological role, bifunctional enzyme with both catalase and broad-spectrum peroxidase activity. This is Catalase-peroxidase from Bradyrhizobium sp. (strain ORS 278).